The primary structure comprises 95 residues: YcgL domain-containing protein APJL_0712 (95 aa).

Positions 4–88 constitute a YcgL domain; that stretch reads HLCAIYKSPK…PPENLLKTFL (85 aa).

This Actinobacillus pleuropneumoniae serotype 3 (strain JL03) protein is YcgL domain-containing protein APJL_0712.